Consider the following 392-residue polypeptide: uncharacterized protein (392 aa).

It belongs to the glycosyltransferase 2 family.

This is an uncharacterized protein from Bacillus subtilis (strain 168).